A 129-amino-acid chain; its full sequence is Protein BUNDLE SHEATH DEFECTIVE 2, chloroplastic (129 aa).

The N-terminal 43 residues, Met1–Lys43, are a transit peptide targeting the chloroplast. The CR-type zinc-finger motif lies at Gln49–Thr123. Cys62, Cys65, Asn68, Cys73, Cys76, Cys97, Cys100, Glu105, Cys108, and Cys111 together coordinate Zn(2+).

It belongs to the BSD2 chaperone family. As to quaternary structure, interacts with the RuBisCo large subunit (RbcL) assembled as an intermediate complex made of eight RbcL and eight BSD2 subunits. As to expression, expressed in shoot tissues, in both bundle sheath and mesophyll cells.

It localises to the plastid. The protein resides in the chloroplast stroma. Chloroplast chaperone required for RuBisCo complex biogenesis and translational regulation of the RuBisCo large subunit (RbcL). Stabilizes an end-state assembly intermediate of eight RbcL subunits until the small subunits (RBCSs) become available to produce a complete stable RuBisCo complex containing eight small and eight large subunits. Involved in the differentiation of bundle sheath cells, especially chloroplast structure. The polypeptide is Protein BUNDLE SHEATH DEFECTIVE 2, chloroplastic (Zea mays (Maize)).